Here is a 586-residue protein sequence, read N- to C-terminus: Eukaryotic translation initiation factor 3 subunit D (586 aa).

Disordered stretches follow at residues 16–37 (EDSW…YAPF) and 104–176 (KRTF…REPS). Residues 108–131 (GRGGGTVFRGRAQRGGAGQRGGRA) are compositionally biased toward gly residues. The segment covering 162 to 174 (GWKDYDKPQRTRE) has biased composition (basic and acidic residues). Residues 301–315 (SIDLVTVNENAADAP) are RNA gate. Residues 563-586 (ANTFEEDDEAADEQEEKATEESEE) are disordered. Acidic residues predominate over residues 566–577 (FEEDDEAADEQE).

The protein belongs to the eIF-3 subunit D family. In terms of assembly, component of the eukaryotic translation initiation factor 3 (eIF-3) complex.

Its subcellular location is the cytoplasm. Functionally, mRNA cap-binding component of the eukaryotic translation initiation factor 3 (eIF-3) complex, which is involved in protein synthesis of a specialized repertoire of mRNAs and, together with other initiation factors, stimulates binding of mRNA and methionyl-tRNAi to the 40S ribosome. The eIF-3 complex specifically targets and initiates translation of a subset of mRNAs involved in cell proliferation. In the eIF-3 complex, eif3d specifically recognizes and binds the 7-methylguanosine cap of a subset of mRNAs. The polypeptide is Eukaryotic translation initiation factor 3 subunit D (Aspergillus clavatus (strain ATCC 1007 / CBS 513.65 / DSM 816 / NCTC 3887 / NRRL 1 / QM 1276 / 107)).